Reading from the N-terminus, the 168-residue chain is Protein OPG162 (168 aa).

Topologically, residues 1-14 are intravirion; sequence MKSLNRQTVSMFKK. The chain crosses the membrane as a helical span at residues 15–37; sequence LSVPAAIMMILSTIISGIGTFLH. Over 38-168 the chain is Virion surface; that stretch reads YKEELMPSAC…SVLCVKKFYK (131 aa). One can recognise a C-type lectin domain in the interval 54–163; sequence YDKHCYLDTN…CKSTQSVLCV (110 aa). Cystine bridges form between Cys75–Cys162 and Cys141–Cys154. Asn133 is a glycosylation site (N-linked (GlcNAc...) asparagine; by host).

Belongs to the orthopoxvirus OPG162 protein family. In terms of assembly, interacts with protein OPG161. Interacts with protein OPG164. Interacts with protein OPG190.

The protein localises to the virion membrane. Its subcellular location is the host Golgi apparatus. Functionally, forms a complex with OPG162 and OPG190 to coordinate the incorporation of OPG164 into wrapped enveloped virion (EV) membranes and, subsequently, the production of actin tails. Therefore plays an essential role in efficient cell-to-cell spread of viral particles. This Homo sapiens (Human) protein is Protein OPG162 (OPG162).